The chain runs to 63 residues: Venom peptide 2b (63 aa).

The signal sequence occupies residues 1-22; the sequence is MRGTSFILFAVVVILGFLHGNA. 5 AXPX repeats span residues 22–25, 26–29, 32–35, 38–41, and 44–47; these read AEPL, ANPE, and ANPD. The propeptide occupies 23 to 48; sequence EPLANPEPSANPDPLANPDPLANPEA. Leucine amide is present on Leu62.

The protein belongs to the MCD family. Mastoparan subfamily. Expressed by the venom gland.

Its subcellular location is the secreted. It localises to the target cell membrane. In terms of biological role, antimicrobial peptide with strong and moderate activity against the fungi B.cinerea (MIC=5 uM) and C.albicans (MIC=100 uM), the Gram-negative bacterium E.coli (MIC=200 uM) and the Gram-positive bacterium S.aureus (MIC=25 uM). Shows cytolytic activity against insect cell lines. Has potent hemolytic activity against human erythrocytes (EC(50)=64 uM). In vivo, peptide injection in the vicinity of the head and thorax of lepidopteran larvae induces feeding disorder followed by death due to starvation. The sequence is that of Venom peptide 2b from Eumenes pomiformis (Potter wasp).